The chain runs to 327 residues: tRNA uridine(34) hydroxylase (327 aa).

Residues 123 to 217 (SDPEVLLVDT…YLEEVKLEES (95 aa)) enclose the Rhodanese domain. The active-site Cysteine persulfide intermediate is C177.

This sequence belongs to the TrhO family.

The catalysed reaction is uridine(34) in tRNA + AH2 + O2 = 5-hydroxyuridine(34) in tRNA + A + H2O. Functionally, catalyzes oxygen-dependent 5-hydroxyuridine (ho5U) modification at position 34 in tRNAs. This is tRNA uridine(34) hydroxylase from Shewanella pealeana (strain ATCC 700345 / ANG-SQ1).